The following is a 271-amino-acid chain: MVSLEQLREHETVRTDPVPESQALVDVRQLSLWYGTKQALYDISVRFPKNQVTAIIGPSGCGKSTLLRSLNRMNDLVPGVRVKGEVLYEGVNIYDPRVDPVAVRRHIGMVFQKPNPFPKTIFENVAFGLRLMGVKGSELEDRVVEALKRAALWEEVKDRFKKESGLRLSGGQQQRLCIARAIAVEPPLLLMDEPTSALDPIATQAIEDLILELKERYTVVIVTHNMQQAARVSDRTLFMHLGVLVEEGPTEVIFTKPKHPYTEAYITGRFG.

The ABC transporter domain occupies 25–266 (VDVRQLSLWY…PKHPYTEAYI (242 aa)). 57–64 (GPSGCGKS) serves as a coordination point for ATP.

It belongs to the ABC transporter superfamily. Phosphate importer (TC 3.A.1.7) family. As to quaternary structure, the complex is composed of two ATP-binding proteins (PstB), two transmembrane proteins (PstC and PstA) and a solute-binding protein (PstS).

It is found in the cell inner membrane. The enzyme catalyses phosphate(out) + ATP + H2O = ADP + 2 phosphate(in) + H(+). In terms of biological role, part of the ABC transporter complex PstSACB involved in phosphate import. Responsible for energy coupling to the transport system. The protein is Phosphate import ATP-binding protein PstB of Thermus thermophilus (strain ATCC BAA-163 / DSM 7039 / HB27).